The primary structure comprises 504 residues: Glutamate--tRNA ligase (504 aa).

The 'HIGH' region signature appears at 12 to 22 (PSPTGALHIGG). Residues 260–264 (KLSKR) carry the 'KMSKS' region motif. Position 263 (K263) interacts with ATP.

This sequence belongs to the class-I aminoacyl-tRNA synthetase family. Glutamate--tRNA ligase type 1 subfamily. As to quaternary structure, monomer.

The protein localises to the cytoplasm. It carries out the reaction tRNA(Glu) + L-glutamate + ATP = L-glutamyl-tRNA(Glu) + AMP + diphosphate. Functionally, catalyzes the attachment of glutamate to tRNA(Glu) in a two-step reaction: glutamate is first activated by ATP to form Glu-AMP and then transferred to the acceptor end of tRNA(Glu). This is Glutamate--tRNA ligase from Bacteroides thetaiotaomicron (strain ATCC 29148 / DSM 2079 / JCM 5827 / CCUG 10774 / NCTC 10582 / VPI-5482 / E50).